The primary structure comprises 134 residues: Crustacean hyperglycemic hormones isoform B (134 aa).

A signal peptide spans 1-24 (MFACRTLCLVVVMVASLGTSGVGG). A Pyrrolidone carboxylic acid modification is found at Gln-61. The residue at position 63 (Phe-63) is a D-phenylalanine; in form CHH-B-II. Cystine bridges form between Cys-67-Cys-103, Cys-83-Cys-99, and Cys-86-Cys-112. Residue Val-132 is modified to Valine amide.

This sequence belongs to the arthropod CHH/MIH/GIH/VIH hormone family. Stereoinversion of L-Phe (form CHH-B-I) to D-Phe (form CHH-B-II). As to expression, produced by the medulla terminalis X-organ in the eyestalks and transported to the sinus gland where they are stored and released. Present also in the ventral nervous system.

The protein resides in the secreted. Functionally, hormone found in the sinus gland of isopods and decapods which controls the blood sugar level. Has a secretagogue action over the amylase released from the midgut gland. May act as a stress hormone and may be involved in the control of molting and reproduction. This is Crustacean hyperglycemic hormones isoform B from Homarus americanus (American lobster).